The primary structure comprises 112 residues: Urease subunit gamma (112 aa).

Belongs to the urease gamma subunit family. As to quaternary structure, heterotrimer of UreA (gamma), UreB (beta) and UreC (alpha) subunits. Three heterotrimers associate to form the active enzyme.

The protein resides in the cytoplasm. It catalyses the reaction urea + 2 H2O + H(+) = hydrogencarbonate + 2 NH4(+). The protein operates within nitrogen metabolism; urea degradation; CO(2) and NH(3) from urea (urease route): step 1/1. This Gloeothece citriformis (strain PCC 7424) (Cyanothece sp. (strain PCC 7424)) protein is Urease subunit gamma.